Consider the following 1224-residue polypeptide: Integrin alpha pat-2 (1224 aa).

The first 27 residues, 1–27 (MREGSFPRRTRLLCLLAAVVLISTVTS), serve as a signal peptide directing secretion. Residues 28-1153 (FNIDTKNVVL…ASEEGRDLPW (1126 aa)) lie on the Extracellular side of the membrane. 7 FG-GAP repeats span residues 29–96 (NIDT…TCRE), 110–173 (NGSH…KTEE), 180–235 (EPAR…TDRP), 236–292 (NTEY…MMIN), 293–347 (LTDE…KPQY), 364–423 (GKQL…GVRE), and 427–490 (QKIE…PESA). Residues asparagine 74, asparagine 110, asparagine 230, and asparagine 292 are each glycosylated (N-linked (GlcNAc...) asparagine). An N-linked (GlcNAc...) asparagine glycan is attached at asparagine 610. Positions 622–624 (RGD) match the Cell attachment site motif. N-linked (GlcNAc...) asparagine glycosylation is found at asparagine 681, asparagine 775, and asparagine 819. Disordered regions lie at residues 898–968 (LRIT…QNTG) and 981–1037 (DYEY…KARF). Residues 920–931 (REEDDESYEDET) are compositionally biased toward acidic residues. Residues 955 to 964 (VYERDEDKIR) are compositionally biased toward basic and acidic residues. The span at 984–1003 (YIPDDQEYDGDDFEDDDEDF) shows a compositional bias: acidic residues. The span at 1008 to 1023 (SKRVKRAPVPKKKKKE) shows a compositional bias: basic residues. Positions 1024–1037 (GSRSGEPRSDKARF) are enriched in basic and acidic residues. A helical transmembrane segment spans residues 1154 to 1174 (WLYLLAILIGLAILILLILLL). Residues 1175-1224 (WRCGFFKRNRPPTEHAELRAEKQPAAHYADTQSRYAPQDQYSQGRHGQML) lie on the Cytoplasmic side of the membrane. Positions 1190-1224 (AELRAEKQPAAHYADTQSRYAPQDQYSQGRHGQML) are disordered. Polar residues predominate over residues 1204 to 1224 (DTQSRYAPQDQYSQGRHGQML).

Belongs to the integrin alpha chain family. Heterodimer of an alpha and a beta subunit. Alpha pat-2 associates with beta pat-3.

Its subcellular location is the membrane. Its function is as follows. Required for muscle development probably through the regulation of the actin-myosin cytoskeleton. During the formation of neuromuscular junctions at the larval stage, negatively regulates membrane protrusion from body wall muscles, probably through lamins such as epi-1, lam-2 and unc-52. Required for distal tip cell migration and dorsal pathfinding. Required for egg-laying. May play a role in cell motility and cell-cell interactions. The protein is Integrin alpha pat-2 of Caenorhabditis briggsae.